A 186-amino-acid polypeptide reads, in one-letter code: Ribosome-recycling factor (186 aa).

This sequence belongs to the RRF family.

It is found in the cytoplasm. Its function is as follows. Responsible for the release of ribosomes from messenger RNA at the termination of protein biosynthesis. May increase the efficiency of translation by recycling ribosomes from one round of translation to another. The sequence is that of Ribosome-recycling factor from Burkholderia multivorans (strain ATCC 17616 / 249).